The primary structure comprises 152 residues: Transcriptional regulator MraZ (152 aa).

SpoVT-AbrB domains follow at residues 5–52 (ASAI…PIHE) and 81–124 (AHEV…DEQA).

Belongs to the MraZ family. In terms of assembly, forms oligomers.

It is found in the cytoplasm. Its subcellular location is the nucleoid. The sequence is that of Transcriptional regulator MraZ from Shewanella putrefaciens (strain CN-32 / ATCC BAA-453).